The following is a 314-amino-acid chain: Fibrinogen-like protein 1 (314 aa).

An N-terminal signal peptide occupies residues 1–22 (MGEIRSFVLITVALILGKESWV). The stretch at 28–62 (CLQEQVRLRAQVRQLETRVKQQQVVIAQLLHEKEV) forms a coiled coil. The region spanning 76–308 (LGGKRHYADC…SVVMKIRPSD (233 aa)) is the Fibrinogen C-terminal domain. Intrachain disulfides connect Cys-85–Cys-114 and Cys-250–Cys-263.

As to quaternary structure, homodimer. Interacts (via the Fibrinogen C-terminal domain) with LAG3 (via Ig-like domains 1 and 2).

The protein localises to the secreted. Functionally, immune suppressive molecule that inhibits antigen-specific T-cell activation by acting as a major ligand of LAG3. Responsible for LAG3 T-cell inhibitory function. Binds LAG3 independently from MHC class II (MHC-II). Secreted by, and promotes growth of, hepatocytes. The polypeptide is Fibrinogen-like protein 1 (Rattus norvegicus (Rat)).